The sequence spans 128 residues: Ribonuclease P protein component (128 aa).

The protein belongs to the RnpA family. Consists of a catalytic RNA component (M1 or rnpB) and a protein subunit.

It catalyses the reaction Endonucleolytic cleavage of RNA, removing 5'-extranucleotides from tRNA precursor.. Functionally, RNaseP catalyzes the removal of the 5'-leader sequence from pre-tRNA to produce the mature 5'-terminus. It can also cleave other RNA substrates such as 4.5S RNA. The protein component plays an auxiliary but essential role in vivo by binding to the 5'-leader sequence and broadening the substrate specificity of the ribozyme. This is Ribonuclease P protein component from Synechococcus sp. (strain CC9902).